The chain runs to 335 residues: Tryptophan--tRNA ligase (335 aa).

ATP-binding positions include 13 to 15 and 21 to 22; these read QPS and GN. A 'HIGH' region motif is present at residues 14 to 22; that stretch reads PSGNLTIGN. Residue Asp136 participates in L-tryptophan binding. ATP contacts are provided by residues 148–150, Ile187, and 196–200; these read GQD and KMSKS. Positions 196–200 match the 'KMSKS' region motif; that stretch reads KMSKS.

The protein belongs to the class-I aminoacyl-tRNA synthetase family. Homodimer.

The protein localises to the cytoplasm. The catalysed reaction is tRNA(Trp) + L-tryptophan + ATP = L-tryptophyl-tRNA(Trp) + AMP + diphosphate + H(+). Catalyzes the attachment of tryptophan to tRNA(Trp). This Buchnera aphidicola subsp. Acyrthosiphon pisum (strain APS) (Acyrthosiphon pisum symbiotic bacterium) protein is Tryptophan--tRNA ligase.